The primary structure comprises 366 residues: tRNA-specific 2-thiouridylase MnmA (366 aa).

ATP contacts are provided by residues 6-13 and leucine 32; that span reads AMSGGVDS. Cysteine 101 acts as the Nucleophile in catalysis. An intrachain disulfide couples cysteine 101 to cysteine 199. Glycine 125 contacts ATP. Residues 148–150 are interaction with tRNA; that stretch reads KDQ. The active-site Cysteine persulfide intermediate is the cysteine 199.

The protein belongs to the MnmA/TRMU family.

The protein resides in the cytoplasm. The catalysed reaction is S-sulfanyl-L-cysteinyl-[protein] + uridine(34) in tRNA + AH2 + ATP = 2-thiouridine(34) in tRNA + L-cysteinyl-[protein] + A + AMP + diphosphate + H(+). Catalyzes the 2-thiolation of uridine at the wobble position (U34) of tRNA, leading to the formation of s(2)U34. This chain is tRNA-specific 2-thiouridylase MnmA, found in Leifsonia xyli subsp. xyli (strain CTCB07).